The chain runs to 173 residues: SKP1-like protein 1 (173 aa).

Positions 115-173 are interaction with the F-box domain of F-box proteins; it reads ILAANYLNIKGLLDLTCQTVADMIKGKTPEEIRKTFNIKNDFTPEEEEEIRRENQWAFE.

The protein belongs to the SKP1 family. In terms of assembly, part of a SCF (SKP1-CUL1-F-box protein) E3 ubiquitin-protein ligase complex. Interacts directly with MOF (via F-box domain). Interacts with rice black streaked dwarf virus RBSDV protein P7-2. Is able to form the SCF complex together with CUL1 and the viral P7-2 protein. Interacts with D3.

The protein localises to the nucleus. Its pathway is protein modification; protein ubiquitination. Its function is as follows. Involved in ubiquitination and subsequent proteasomal degradation of target proteins. Together with CUL1, a RING-box and a F-box protein, it forms a SCF E3 ubiquitin ligase complex. The functional specificity of this complex depends on the type of F-box protein. In the SCF complex, it serves as an adapter that links the F-box protein to CUL1. The polypeptide is SKP1-like protein 1 (Oryza sativa subsp. japonica (Rice)).